A 482-amino-acid chain; its full sequence is ATP synthase subunit beta (482 aa).

ATP is bound at residue 162–169 (GGAGVGKT).

It belongs to the ATPase alpha/beta chains family. As to quaternary structure, F-type ATPases have 2 components, CF(1) - the catalytic core - and CF(0) - the membrane proton channel. CF(1) has five subunits: alpha(3), beta(3), gamma(1), delta(1), epsilon(1). CF(0) has four main subunits: a(1), b(1), b'(1) and c(9-12).

Its subcellular location is the cellular thylakoid membrane. The enzyme catalyses ATP + H2O + 4 H(+)(in) = ADP + phosphate + 5 H(+)(out). Produces ATP from ADP in the presence of a proton gradient across the membrane. The catalytic sites are hosted primarily by the beta subunits. In Nostoc punctiforme (strain ATCC 29133 / PCC 73102), this protein is ATP synthase subunit beta.